The following is a 469-amino-acid chain: Regulator of G-protein signaling 7 (469 aa).

Positions 37–112 (EKNGIPIRTV…DDGTFYRFQT (76 aa)) constitute a DEP domain. Phosphoserine is present on residues S229 and S241. The segment at 236-255 (DIRSHSPTHTPTPETKPPTE) is disordered. T243 carries the post-translational modification Phosphothreonine. One can recognise a G protein gamma domain in the interval 255–316 (EDELHQQIKY…LSDDTTFWEL (62 aa)). Residues 333-448 (GMDEALKDPV…IRSSAYQELL (116 aa)) form the RGS domain. S434 is modified (phosphoserine).

Interacts with GNB5, forming the RGS7-GNB5 complex. Interacts with GPR158; promotes the GTPase activator activity of the RGS7-GNB5 complex in absence of glycine, in contrast GTPase activator activity of the RGS7-GNB5 complex is inhibited in presence of glycine. Interacts with GPR179. Interacts with PKD1; this prevents rapid proteasomal degradation. Interacts with RGS7BP, leading to regulate the subcellular location of the heterodimer formed with GNB5. Interacts (phosphorylated form) with 14-3-3 protein YWHAQ. Interacts with SNAPIN. Interacts with GNAI1. Interacts with GNAO1, GNAI3 and GNAZ. In terms of processing, palmitoylated. Post-translationally, ubiquitinated, leading to rapid proteasomal degradation. Phosphorylation and subsequent interaction with 14-3-3 proteins inhibits GAP activity. As to expression, detected in brain (at protein level).

It is found in the cytoplasm. The protein localises to the cytosol. It localises to the cell membrane. Its subcellular location is the membrane. In terms of biological role, GTPase activator component of the RGS7-GNB5 complex that regulates G protein-coupled receptor signaling cascades. The RGS7-GNB5 complex acts as an inhibitor signal transduction by promoting the GTPase activity of G protein alpha subunits, such as GNAO1, thereby driving them into their inactive GDP-bound form. May play a role in synaptic vesicle exocytosis. Glycine-dependent regulation of the RGS7-GNB5 complex by GPR158 affects mood and cognition via its ability to regulate neuronal excitability in L2/L3 pyramidal neurons of the prefrontal cortex. Modulates the activity of potassium channels that are activated by GNAO1 in response to muscarinic acetylcholine receptor M2/CHRM2 signaling. In Mus musculus (Mouse), this protein is Regulator of G-protein signaling 7 (Rgs7).